Here is a 344-residue protein sequence, read N- to C-terminus: Phosphoribosylformylglycinamidine cyclo-ligase (344 aa).

Belongs to the AIR synthase family.

The protein resides in the cytoplasm. It carries out the reaction 2-formamido-N(1)-(5-O-phospho-beta-D-ribosyl)acetamidine + ATP = 5-amino-1-(5-phospho-beta-D-ribosyl)imidazole + ADP + phosphate + H(+). It functions in the pathway purine metabolism; IMP biosynthesis via de novo pathway; 5-amino-1-(5-phospho-D-ribosyl)imidazole from N(2)-formyl-N(1)-(5-phospho-D-ribosyl)glycinamide: step 2/2. This chain is Phosphoribosylformylglycinamidine cyclo-ligase, found in Glaesserella parasuis serovar 5 (strain SH0165) (Haemophilus parasuis).